The primary structure comprises 658 residues: Biosynthetic arginine decarboxylase (658 aa).

Lys-127 carries the N6-(pyridoxal phosphate)lysine modification. 307-317 (FDVGGGLGVDY) is a substrate binding site.

Belongs to the Orn/Lys/Arg decarboxylase class-II family. SpeA subfamily. Homotetramer. It depends on pyridoxal 5'-phosphate as a cofactor. Mg(2+) serves as cofactor. In terms of processing, processed post-translationally to a 70 kDa mature form. Post-translationally, the N-terminus is blocked.

Its subcellular location is the periplasm. The catalysed reaction is L-arginine + H(+) = agmatine + CO2. Its pathway is amine and polyamine biosynthesis; agmatine biosynthesis; agmatine from L-arginine: step 1/1. Its activity is regulated as follows. Down-regulated by polyamine end products putrescine and spermidine. Functionally, catalyzes the biosynthesis of agmatine from arginine. The sequence is that of Biosynthetic arginine decarboxylase (speA) from Escherichia coli (strain K12).